The following is a 397-amino-acid chain: MKTPFRDRVELFANKDVLKDHYEPEEIRERDEEIDQYANALQDVVDGWEPDNVFVYGKTGVGKTAVTRYMMDALEYEADDRDGVDSVTSVEVNCHHHPSSYQAAIALVNELRGDTDSDPLTTGLSTSDVLNALFDEIEAREGTVLIVLDEIDNLDDDDMLLYQLPRAKTNGNIEDSQVAVVGISNDYTFRNDLSPKVQDTLCEREIKFPPYDANELVTILDDRAERALSSGVLTGGVIPQCAALAARDRGSARQAIDLLRESVNVAIEDERETVTEDDVETAVRRVERGRIKDSIKDLTTHGQYVLLAVTQTAIADDTPVRAKELYEVYADIAAEYASDPLSQRSVHDHLNDLSMLGFLRQHDRNYGRGGGQFFEYELDVDATMVQEAIADADDATV.

ATP is bound by residues 61–65 (VGKTA), Tyr-211, and Arg-223.

Belongs to the CDC6/cdc18 family.

In terms of biological role, involved in regulation of DNA replication. In Halobacterium salinarum (strain ATCC 700922 / JCM 11081 / NRC-1) (Halobacterium halobium), this protein is ORC1-type DNA replication protein 8 (orc8).